A 309-amino-acid chain; its full sequence is Coproporphyrin III ferrochelatase (309 aa).

Residues Tyr12, Arg29, 45-46, Ser53, and Tyr124 contribute to the Fe-coproporphyrin III site; that span reads RY. The Fe(2+) site is built by His182 and Glu263.

The protein belongs to the ferrochelatase family.

The protein localises to the cytoplasm. The catalysed reaction is Fe-coproporphyrin III + 2 H(+) = coproporphyrin III + Fe(2+). Its pathway is porphyrin-containing compound metabolism; protoheme biosynthesis. Functionally, involved in coproporphyrin-dependent heme b biosynthesis. Catalyzes the insertion of ferrous iron into coproporphyrin III to form Fe-coproporphyrin III. The chain is Coproporphyrin III ferrochelatase from Listeria monocytogenes serotype 4b (strain F2365).